Reading from the N-terminus, the 979-residue chain is Putative cellulose synthase-like protein D6 (979 aa).

Positions 1-24 (MMDGESPLRHPRISHVSNSGSDFG) are disordered. Positions 14–24 (SHVSNSGSDFG) are enriched in low complexity. Helical transmembrane passes span 116–136 (IIIALYRILIVVRVVSLALFL) and 147–167 (ALWLWLLSVICELWFAFSWLL). Active-site residues include Asp-247 and Asp-683. Transmembrane regions (helical) follow at residues 765–785 (IFILTYCFLPPLSLFSGHFVV), 788–808 (LTGSFLIYLLIITLSLCGLAV), 837–857 (LVAVLQGILKVIAGVEISFTL), 882–902 (ALMIPPLTIIILNIVAILFAV), 913–933 (WSNLLGGTFFASWVLLHMYPF), and 946–966 (TVVYVWSGLIAICLSLLYITI).

The protein belongs to the glycosyltransferase 2 family. Plant cellulose synthase-like D subfamily.

The protein localises to the golgi apparatus membrane. Thought to be a Golgi-localized beta-glycan synthase that polymerize the backbones of noncellulosic polysaccharides (hemicelluloses) of plant cell wall. The sequence is that of Putative cellulose synthase-like protein D6 (CSLD6) from Arabidopsis thaliana (Mouse-ear cress).